The sequence spans 253 residues: Putative tyrosine-protein phosphatase OCA1 (253 aa).

Residues 1–21 (MHRTSIVEELERHQQDQKADQ) are compositionally biased toward basic and acidic residues. Residues 1–84 (MHRTSIVEEL…PRMKTIVKPP (84 aa)) are disordered. A compositionally biased stretch (polar residues) spans 27 to 65 (SDASNSALQESSDPRLSTTDNTNTPEINVNDQQQEQQVA). In terms of domain architecture, Tyrosine-protein phosphatase spans 93–249 (NFGPVERNLY…IIVYPESAPE (157 aa)). C186 acts as the Phosphocysteine intermediate in catalysis.

Belongs to the protein-tyrosine phosphatase family.

Its subcellular location is the cytoplasm. It catalyses the reaction O-phospho-L-tyrosyl-[protein] + H2O = L-tyrosyl-[protein] + phosphate. Functionally, putative tyrosine-protein phosphatase required for protection against superoxide stress. The polypeptide is Putative tyrosine-protein phosphatase OCA1 (OCA1) (Yarrowia lipolytica (strain CLIB 122 / E 150) (Yeast)).